A 196-amino-acid chain; its full sequence is GTP cyclohydrolase 1 (196 aa).

Residues cysteine 86, histidine 89, and cysteine 157 each contribute to the Zn(2+) site.

Belongs to the GTP cyclohydrolase I family. As to quaternary structure, toroid-shaped homodecamer, composed of two pentamers of five dimers.

It carries out the reaction GTP + H2O = 7,8-dihydroneopterin 3'-triphosphate + formate + H(+). Its pathway is cofactor biosynthesis; 7,8-dihydroneopterin triphosphate biosynthesis; 7,8-dihydroneopterin triphosphate from GTP: step 1/1. The chain is GTP cyclohydrolase 1 from Parabacteroides distasonis (strain ATCC 8503 / DSM 20701 / CIP 104284 / JCM 5825 / NCTC 11152).